Consider the following 963-residue polypeptide: Spliceosome associated factor 3, U4/U6 recycling protein (963 aa).

The segment covering 1-11 (MATAAETSASE) has biased composition (low complexity). 2 disordered regions span residues 1-36 (MATAAETSASEPEAESKAGPKADGEEDEVKAARTRR) and 50-90 (TMGP…YDEE). N-acetylalanine is present on Ala-2. The segment at 2 to 351 (ATAAETSASE…LVPDLWIRYS (350 aa)) is mediates interaction with PRPF3. 2 positions are modified to phosphoserine: Ser-10 and Ser-16. A compositionally biased stretch (basic and acidic residues) spans 14-23 (AESKAGPKAD). A coiled-coil region spans residues 21–46 (KADGEEDEVKAARTRRKVLSRAVAAA). Acidic residues predominate over residues 57-69 (QQEEGVSESDGDE). Positions 82–110 (EYEWEYDEEEEKNQLEIERLEEQLSINVY) form a coiled coil. HAT repeat units lie at residues 126–158 (GELTKVRMARQKMSEIFPLTEELWLEWLHDEIS), 164–195 (LDREHVYDLFEKAVKDYICPNIWLEYGQYSVG), 201–237 (GGLEKVRSVFERALSSVGLHMTKGLALWEAYREFESA), 242–275 (ARLEKVHSLFRRQLAIPLYDMEATFAEYEEWSED), 324–356 (GDPARIQLIFERALVENCLVPDLWIRYSQYLDR), 359–391 (KVKDLVLSVHNRAIRNCPWTVALWSRYLLAMER), 394–430 (VDHQVISVTFEKALNAGFIQATDYVEIWQAYLDYLRR), and 487–520 (NNMQKARELWDSIMTRGNAKYANMWLEYYNLERA). Residue Ser-215 is modified to Phosphoserine. The tract at residues 487–520 (NNMQKARELWDSIMTRGNAKYANMWLEYYNLERA) is required for interaction with USP4. Residues 537 to 953 (CTSDYPEHVC…AATEAPKMSN (417 aa)) form a necessary and sufficient for U6 snRNA binding region. Residues 559–619 (LEDWDIAVQK…ALKKKKKIRG (61 aa)) are a coiled coil. Residues 590–601 (LVQQEEEKAEQR) show a composition bias toward basic and acidic residues. Positions 590–694 (LVQQEEEKAE…AASLKRDMPK (105 aa)) are disordered. Positions 600-670 (QRKRARAEKK…EVAAGPAGKC (71 aa)) are required for nuclear localization. The short motif at 601-608 (RKRARAEK) is the Nuclear localization signal element. A compositionally biased stretch (basic residues) spans 602-617 (KRARAEKKALKKKKKI). The span at 626-639 (DEDDEKEWGDDEEE) shows a compositional bias: acidic residues. Phosphoserine is present on Ser-650. A Phosphothreonine modification is found at Thr-657. A compositionally biased stretch (basic and acidic residues) spans 677 to 694 (PPSKQKEKAASLKRDMPK). One can recognise an RRM 1 domain in the interval 704-782 (ITVFVSNLPY…RPMFVSPCVD (79 aa)). Phosphoserine is present on residues Ser-769, Ser-795, and Ser-852. One can recognise an RRM 2 domain in the interval 801–878 (HKLFISGLPF…NIIKVAISNP (78 aa)). Residues 878-898 (PPQRKVPEKPETRKAPGGPML) form a disordered region. A compositionally biased stretch (basic and acidic residues) spans 882–891 (KVPEKPETRK). The residue at position 906 (Arg-906) is an Omega-N-methylarginine. The segment at 920 to 948 (LQRPSAAAPQAENGPAAAPAVAAPAATEA) is disordered. Positions 925 to 948 (AAAPQAENGPAAAPAVAAPAATEA) are enriched in low complexity.

Component of the 7SK snRNP complex at least composed of P-TEFb (composed of CDK9 and CCNT1/cyclin-T1), HEXIM1, HEXIM2, BCDIN3, SART3 proteins and 7SK and U6 snRNAs. Interacts with AGO1 and AGO2. Interacts with PRPF3 and USP4; the interaction with PRPF3 is direct and recruits USP4 to its substrate PRPF3. Interacts with USP15; the interaction is direct. Interacts with HIV-1 Tat. In terms of tissue distribution, ubiquitously expressed.

Its subcellular location is the nucleus. The protein resides in the nucleoplasm. The protein localises to the cajal body. It localises to the nucleus speckle. It is found in the cytoplasm. Its function is as follows. U6 snRNP-binding protein that functions as a recycling factor of the splicing machinery. Promotes the initial reassembly of U4 and U6 snRNPs following their ejection from the spliceosome during its maturation. Also binds U6atac snRNPs and may function as a recycling factor for U4atac/U6atac spliceosomal snRNP, an initial step in the assembly of U12-type spliceosomal complex. The U12-type spliceosomal complex plays a role in the splicing of introns with non-canonical splice sites. May also function as a substrate-targeting factor for deubiquitinases like USP4 and USP15. Recruits USP4 to ubiquitinated PRPF3 within the U4/U5/U6 tri-snRNP complex, promoting PRPF3 deubiquitination and thereby regulating the spliceosome U4/U5/U6 tri-snRNP spliceosomal complex disassembly. May also recruit the deubiquitinase USP15 to histone H2B and mediate histone deubiquitination, thereby regulating gene expression and/or DNA repair. May play a role in hematopoiesis probably through transcription regulation of specific genes including MYC. Functionally, regulates Tat transactivation activity through direct interaction. May be a cellular factor for HIV-1 gene expression and viral replication. The chain is Spliceosome associated factor 3, U4/U6 recycling protein from Homo sapiens (Human).